We begin with the raw amino-acid sequence, 459 residues long: UDP-N-acetylmuramoylalanine--D-glutamate ligase (459 aa).

Position 131–137 (131–137 (GANGKST)) interacts with ATP.

It belongs to the MurCDEF family.

Its subcellular location is the cytoplasm. The catalysed reaction is UDP-N-acetyl-alpha-D-muramoyl-L-alanine + D-glutamate + ATP = UDP-N-acetyl-alpha-D-muramoyl-L-alanyl-D-glutamate + ADP + phosphate + H(+). The protein operates within cell wall biogenesis; peptidoglycan biosynthesis. Cell wall formation. Catalyzes the addition of glutamate to the nucleotide precursor UDP-N-acetylmuramoyl-L-alanine (UMA). The chain is UDP-N-acetylmuramoylalanine--D-glutamate ligase from Methylococcus capsulatus (strain ATCC 33009 / NCIMB 11132 / Bath).